A 343-amino-acid chain; its full sequence is Cathepsin Q (343 aa).

The signal sequence occupies residues 1–20; that stretch reads MTPAVFLVILCLGVVPGASA. Residues 21-124 constitute a propeptide, activation peptide; it reads LDLSLDVQWQ…FPNSWNWRDA (104 aa). Intrachain disulfides connect Cys-146/Cys-189 and Cys-180/Cys-222. The active site involves Cys-149. A glycan (N-linked (GlcNAc...) asparagine) is linked at Asn-228. Residues Cys-280 and Cys-332 are joined by a disulfide bond. Residue His-286 is part of the active site. The N-linked (GlcNAc...) asparagine glycan is linked to Asn-298. The active site involves Asn-310.

It belongs to the peptidase C1 family. As to expression, highly expressed in placenta.

It localises to the lysosome. In Rattus norvegicus (Rat), this protein is Cathepsin Q (Ctsq).